The primary structure comprises 285 residues: Acetyl-coenzyme A carboxylase carboxyl transferase subunit beta (285 aa).

A CoA carboxyltransferase N-terminal domain is found at 23-285 (VFRRCDGCSH…HLTAGRRARR (263 aa)). Cysteine 27, cysteine 30, cysteine 46, and cysteine 49 together coordinate Zn(2+). Residues 27-49 (CDGCSHTHDAAELARTFEVCSQC) form a C4-type zinc finger.

This sequence belongs to the AccD/PCCB family. In terms of assembly, acetyl-CoA carboxylase is a heterohexamer composed of biotin carboxyl carrier protein (AccB), biotin carboxylase (AccC) and two subunits each of ACCase subunit alpha (AccA) and ACCase subunit beta (AccD). The cofactor is Zn(2+).

It localises to the cytoplasm. The catalysed reaction is N(6)-carboxybiotinyl-L-lysyl-[protein] + acetyl-CoA = N(6)-biotinyl-L-lysyl-[protein] + malonyl-CoA. The protein operates within lipid metabolism; malonyl-CoA biosynthesis; malonyl-CoA from acetyl-CoA: step 1/1. Its function is as follows. Component of the acetyl coenzyme A carboxylase (ACC) complex. Biotin carboxylase (BC) catalyzes the carboxylation of biotin on its carrier protein (BCCP) and then the CO(2) group is transferred by the transcarboxylase to acetyl-CoA to form malonyl-CoA. The protein is Acetyl-coenzyme A carboxylase carboxyl transferase subunit beta of Sorangium cellulosum (strain So ce56) (Polyangium cellulosum (strain So ce56)).